Reading from the N-terminus, the 715-residue chain is Methionine--tRNA ligase (715 aa).

The 'HIGH' region motif lies at P17–H27. C148, C151, C161, and C164 together coordinate Zn(2+). The 'KMSKS' region signature appears at K359 to S363. Position 362 (K362) interacts with ATP. A tRNA-binding domain is found at D614–K715.

This sequence belongs to the class-I aminoacyl-tRNA synthetase family. MetG type 1 subfamily. Homodimer. Zn(2+) serves as cofactor.

The protein localises to the cytoplasm. The catalysed reaction is tRNA(Met) + L-methionine + ATP = L-methionyl-tRNA(Met) + AMP + diphosphate. Its function is as follows. Is required not only for elongation of protein synthesis but also for the initiation of all mRNA translation through initiator tRNA(fMet) aminoacylation. The sequence is that of Methionine--tRNA ligase from Leptospira interrogans serogroup Icterohaemorrhagiae serovar copenhageni (strain Fiocruz L1-130).